We begin with the raw amino-acid sequence, 324 residues long: Beta-ketoacyl-[acyl-carrier-protein] synthase III (324 aa).

Residues Cys112 and His249 contribute to the active site. The interval 250–254 is ACP-binding; sequence QANRR. The active site involves Asn279.

Belongs to the thiolase-like superfamily. FabH family. In terms of assembly, homodimer.

It is found in the cytoplasm. The enzyme catalyses malonyl-[ACP] + acetyl-CoA + H(+) = 3-oxobutanoyl-[ACP] + CO2 + CoA. It functions in the pathway lipid metabolism; fatty acid biosynthesis. Functionally, catalyzes the condensation reaction of fatty acid synthesis by the addition to an acyl acceptor of two carbons from malonyl-ACP. Catalyzes the first condensation reaction which initiates fatty acid synthesis and may therefore play a role in governing the total rate of fatty acid production. Possesses both acetoacetyl-ACP synthase and acetyl transacylase activities. Its substrate specificity determines the biosynthesis of branched-chain and/or straight-chain of fatty acids. In Streptococcus equi subsp. zooepidemicus (strain H70), this protein is Beta-ketoacyl-[acyl-carrier-protein] synthase III.